The chain runs to 377 residues: Enoyl reductase cheB (377 aa).

An enoyl reductase (ER) domain region spans residues 18 to 361; that stretch reads GGSLVIARDV…REISAEKLVV (344 aa). 49 to 52 is an NADP(+) binding site; it reads CDFK. Residue 137–144 coordinates substrate; sequence PCCIATMG. Residues 173-176, 200-203, tyrosine 218, 265-266, and threonine 283 contribute to the NADP(+) site; these read SSSV, SPKN, and LE. Position 285–289 (285–289) interacts with substrate; the sequence is GAIII. Residue 354–355 participates in NADP(+) binding; that stretch reads IS.

This sequence belongs to the zinc-containing alcohol dehydrogenase family. Heme serves as cofactor.

It participates in secondary metabolite biosynthesis. In terms of biological role, enoyl reductase; part of the gene cluster that mediates the biosynthesis of chaetoglobosin A which has a unique inhibitory activity against actin polymerization in mammalian cells. Chaetoglobosin A and its intermediates are involved in the morphological differentiation of C.globosum. The first step of the pathway is the synthesis of prochaetoglobosin I via condensation of one acetyl-CoA, 8 malonyl-CoA, and a L-tryptophan molecule by the PKS-NRPS hybrid synthetase cheA, followed by reduction of backbone double bond to install desired geometry by the enoyl reductase cheB. Further multiple oxidation steps performed by the cytochrome P450 monooxygenases cheE and cheG, as well as by the FAD-linked oxidoreductase cheF, lead to the formation of chaetoglobosin A. Depending on the order of action of these reductases, distinct intermediates can be identified. Within the pathway, the cytochrome P450 monooxygenase cheE catalyzes a stereospecific epoxidation on prochaetoglobosin I, cytoglobosin D, and chaetoglobosin J intermediates. The FAD-linked oxidoreductase cheF performs dehydrogenation of the C-20 hydroxyl groups in the 20-dihyrochaetoglobosin A and cytoglobosin D intermediates. Finally, the cytochrome P450 monooxygenase cheG can catalyze the stereospecific dihydroxylation of prochaetoglobosin I and prochaetoglobosin IV at C-19 and C-20, respectively. The Diels-Alderase cheD may play a role in the post-PKS-NRPS biosynthetic steps catalyzing Diels-Alder cyclization. The polypeptide is Enoyl reductase cheB (Chaetomium globosum (strain ATCC 6205 / CBS 148.51 / DSM 1962 / NBRC 6347 / NRRL 1970) (Soil fungus)).